We begin with the raw amino-acid sequence, 448 residues long: MPALEVNFDGLVGPTHNYAGLSYGNVASLNNAASFSNPQEAVLQGLEKMKAMHDKGLTQGVFAPHARPDLNILRRLGFSGNDAQIINKAFNADPILLRACYSASAMWTANAATVSPSPDTTDGKVHFTAANLNNKFHRSLEPATTTRLLKAMFNNQNHFAHHTHLPDQGFFGDEGAANHTRFCDSHGEQGLEMFVFGASAFNSHLPKPVKFPARQTLEASEAICRLHNLKDTSQILLQQNPDVIDQGVFHNDVIAVGNANVLLCHQQAFLNQQQALQDIREAYVGNKQFYIIEVPTSKVTIQDAVSSYLFNSQLVSLSDGSMLLVAPKECQRNSAVNDYIEEMIMADNPINQVRFFDLRQSMQNGGGPACLRLRVALNEQELAAVNPDVILTDTKYTQLCNWAQRNYRDQLGAKDFADPALLSESYQALDELTQLLNLGSVYDFQLEG.

Residues A19–S28, N110, and H137–R138 each bind substrate. The active site involves E174. Residue R214 coordinates substrate. H250 is a catalytic residue. 2 residues coordinate substrate: D252 and N364. C370 serves as the catalytic Nucleophile.

The protein belongs to the succinylarginine dihydrolase family. Homodimer.

It carries out the reaction N(2)-succinyl-L-arginine + 2 H2O + 2 H(+) = N(2)-succinyl-L-ornithine + 2 NH4(+) + CO2. Its pathway is amino-acid degradation; L-arginine degradation via AST pathway; L-glutamate and succinate from L-arginine: step 2/5. In terms of biological role, catalyzes the hydrolysis of N(2)-succinylarginine into N(2)-succinylornithine, ammonia and CO(2). This Pseudoalteromonas translucida (strain TAC 125) protein is N-succinylarginine dihydrolase.